The following is a 485-amino-acid chain: Protein nucleotidyltransferase YdiU (485 aa).

ATP-binding residues include glycine 90, glycine 92, arginine 93, lysine 113, aspartate 125, glycine 126, arginine 176, and arginine 183. Catalysis depends on aspartate 252, which acts as the Proton acceptor. The Mg(2+) site is built by asparagine 253 and aspartate 262. Aspartate 262 provides a ligand contact to ATP.

The protein belongs to the SELO family. Mg(2+) is required as a cofactor. The cofactor is Mn(2+).

It catalyses the reaction L-seryl-[protein] + ATP = 3-O-(5'-adenylyl)-L-seryl-[protein] + diphosphate. The catalysed reaction is L-threonyl-[protein] + ATP = 3-O-(5'-adenylyl)-L-threonyl-[protein] + diphosphate. It carries out the reaction L-tyrosyl-[protein] + ATP = O-(5'-adenylyl)-L-tyrosyl-[protein] + diphosphate. The enzyme catalyses L-histidyl-[protein] + UTP = N(tele)-(5'-uridylyl)-L-histidyl-[protein] + diphosphate. It catalyses the reaction L-seryl-[protein] + UTP = O-(5'-uridylyl)-L-seryl-[protein] + diphosphate. The catalysed reaction is L-tyrosyl-[protein] + UTP = O-(5'-uridylyl)-L-tyrosyl-[protein] + diphosphate. Functionally, nucleotidyltransferase involved in the post-translational modification of proteins. It can catalyze the addition of adenosine monophosphate (AMP) or uridine monophosphate (UMP) to a protein, resulting in modifications known as AMPylation and UMPylation. The sequence is that of Protein nucleotidyltransferase YdiU from Vibrio atlanticus (strain LGP32) (Vibrio splendidus (strain Mel32)).